The primary structure comprises 610 residues: V-type proton ATPase catalytic subunit A (610 aa).

G245–T252 serves as a coordination point for ATP.

The protein belongs to the ATPase alpha/beta chains family. As to quaternary structure, V-ATPase is a heteromultimeric enzyme composed of a peripheral catalytic V1 complex (main components: subunits A, B, C, D, E, and F) attached to an integral membrane V0 proton pore complex (main component: the proteolipid protein).

The enzyme catalyses ATP + H2O + 4 H(+)(in) = ADP + phosphate + 5 H(+)(out). Functionally, catalytic subunit of the peripheral V1 complex of vacuolar ATPase. V-ATPase vacuolar ATPase is responsible for acidifying a variety of intracellular compartments in eukaryotic cells. This chain is V-type proton ATPase catalytic subunit A, found in Trypanosoma congolense.